Reading from the N-terminus, the 426-residue chain is Enolase (426 aa).

Positions 32–53 (TGRAAVPSGASTGAYEAHEQRD) are disordered. Gln163 provides a ligand contact to (2R)-2-phosphoglycerate. Glu205 functions as the Proton donor in the catalytic mechanism. Mg(2+)-binding residues include Asp242, Glu285, and Asp312. Lys337, Arg366, Ser367, and Lys388 together coordinate (2R)-2-phosphoglycerate. Catalysis depends on Lys337, which acts as the Proton acceptor.

Belongs to the enolase family. Requires Mg(2+) as cofactor.

Its subcellular location is the cytoplasm. It localises to the secreted. It is found in the cell surface. It catalyses the reaction (2R)-2-phosphoglycerate = phosphoenolpyruvate + H2O. The protein operates within carbohydrate degradation; glycolysis; pyruvate from D-glyceraldehyde 3-phosphate: step 4/5. Catalyzes the reversible conversion of 2-phosphoglycerate (2-PG) into phosphoenolpyruvate (PEP). It is essential for the degradation of carbohydrates via glycolysis. The polypeptide is Enolase (Hyphomonas neptunium (strain ATCC 15444)).